A 102-amino-acid polypeptide reads, in one-letter code: PE family immunomodulator PE5 (102 aa).

A PE domain is found at 3–92 (LRVVPEGLAA…GASYLAGDAA (90 aa)).

The protein belongs to the mycobacterial PE family.

Its subcellular location is the secreted. The protein resides in the cell envelope. It localises to the cell surface. In terms of biological role, important for the siderophore-mediated iron-acquisition function of ESX-3. May play a pivotal role in the evasion of host immune response by M.tuberculosis. Mediates production of IL-10 via activation of the p38 and ERK1/2 mitogen-activated protein kinase (MAPK) signaling pathways. This Mycobacterium tuberculosis (strain ATCC 25618 / H37Rv) protein is PE family immunomodulator PE5.